Reading from the N-terminus, the 246-residue chain is UPF0309 protein OB3413 (246 aa).

Residues 33–212 (MATAVMNGNS…VLKMIEIFEE (180 aa)) enclose the SIS domain.

This sequence belongs to the UPF0309 family.

This chain is UPF0309 protein OB3413, found in Oceanobacillus iheyensis (strain DSM 14371 / CIP 107618 / JCM 11309 / KCTC 3954 / HTE831).